We begin with the raw amino-acid sequence, 148 residues long: UPF0756 membrane protein Ent638_1667 (148 aa).

4 consecutive transmembrane segments (helical) span residues 14 to 34 (ALGF…LIIV), 51 to 71 (LTIG…SGTL), 86 to 106 (LIAI…VTLM), and 121 to 141 (VLGV…AGLV).

It belongs to the UPF0756 family.

It localises to the cell membrane. The chain is UPF0756 membrane protein Ent638_1667 from Enterobacter sp. (strain 638).